The primary structure comprises 86 residues: Small ribosomal subunit protein bS20 (86 aa).

This sequence belongs to the bacterial ribosomal protein bS20 family.

Functionally, binds directly to 16S ribosomal RNA. This is Small ribosomal subunit protein bS20 from Bifidobacterium adolescentis (strain ATCC 15703 / DSM 20083 / NCTC 11814 / E194a).